Reading from the N-terminus, the 349-residue chain is Ornithine carbamoyltransferase, mitochondrial (349 aa).

Residues 73-76 (STRT), Arg124, His151, and Gln154 each bind carbamoyl phosphate. 4 residues coordinate L-ornithine: Asn195, Asp261, Ser265, and Met266. Catalysis depends on Cys303, which acts as the Proton acceptor. Carbamoyl phosphate is bound by residues 303-304 (CL) and Arg330.

This sequence belongs to the aspartate/ornithine carbamoyltransferase superfamily. OTCase family. In terms of assembly, homotrimer.

It localises to the mitochondrion matrix. It catalyses the reaction carbamoyl phosphate + L-ornithine = L-citrulline + phosphate + H(+). It participates in amino-acid biosynthesis; L-arginine biosynthesis; L-arginine from L-ornithine and carbamoyl phosphate: step 1/3. This chain is Ornithine carbamoyltransferase, mitochondrial, found in Coccidioides immitis (strain RS) (Valley fever fungus).